A 246-amino-acid polypeptide reads, in one-letter code: 4-hydroxy-tetrahydrodipicolinate reductase (246 aa).

G7–M12 is a binding site for NAD(+). R34 serves as a coordination point for NADP(+). Residues A76–T78 and C102–T105 each bind NAD(+). The active-site Proton donor/acceptor is H135. H136 is a (S)-2,3,4,5-tetrahydrodipicolinate binding site. K139 acts as the Proton donor in catalysis. Position 145–146 (G145–T146) interacts with (S)-2,3,4,5-tetrahydrodipicolinate.

The protein belongs to the DapB family.

It is found in the cytoplasm. The catalysed reaction is (S)-2,3,4,5-tetrahydrodipicolinate + NAD(+) + H2O = (2S,4S)-4-hydroxy-2,3,4,5-tetrahydrodipicolinate + NADH + H(+). The enzyme catalyses (S)-2,3,4,5-tetrahydrodipicolinate + NADP(+) + H2O = (2S,4S)-4-hydroxy-2,3,4,5-tetrahydrodipicolinate + NADPH + H(+). It functions in the pathway amino-acid biosynthesis; L-lysine biosynthesis via DAP pathway; (S)-tetrahydrodipicolinate from L-aspartate: step 4/4. In terms of biological role, catalyzes the conversion of 4-hydroxy-tetrahydrodipicolinate (HTPA) to tetrahydrodipicolinate. This is 4-hydroxy-tetrahydrodipicolinate reductase from Chlamydia caviae (strain ATCC VR-813 / DSM 19441 / 03DC25 / GPIC) (Chlamydophila caviae).